A 545-amino-acid chain; its full sequence is Chaperonin GroEL (545 aa).

ATP-binding positions include 29-32 (TLGP), 86-90 (DGTTT), Gly413, 476-478 (NAA), and Asp492.

This sequence belongs to the chaperonin (HSP60) family. Forms a cylinder of 14 subunits composed of two heptameric rings stacked back-to-back. Interacts with the co-chaperonin GroES.

The protein localises to the cytoplasm. It catalyses the reaction ATP + H2O + a folded polypeptide = ADP + phosphate + an unfolded polypeptide.. Functionally, together with its co-chaperonin GroES, plays an essential role in assisting protein folding. The GroEL-GroES system forms a nano-cage that allows encapsulation of the non-native substrate proteins and provides a physical environment optimized to promote and accelerate protein folding. This Oceanobacillus iheyensis (strain DSM 14371 / CIP 107618 / JCM 11309 / KCTC 3954 / HTE831) protein is Chaperonin GroEL.